A 258-amino-acid polypeptide reads, in one-letter code: Hydroxyacylglutathione hydrolase (258 aa).

The Zn(2+) site is built by histidine 55, histidine 57, aspartate 59, histidine 60, histidine 115, aspartate 132, and histidine 170.

This sequence belongs to the metallo-beta-lactamase superfamily. Glyoxalase II family. Monomer. The cofactor is Zn(2+).

The enzyme catalyses an S-(2-hydroxyacyl)glutathione + H2O = a 2-hydroxy carboxylate + glutathione + H(+). The protein operates within secondary metabolite metabolism; methylglyoxal degradation; (R)-lactate from methylglyoxal: step 2/2. Thiolesterase that catalyzes the hydrolysis of S-D-lactoyl-glutathione to form glutathione and D-lactic acid. This is Hydroxyacylglutathione hydrolase from Shewanella halifaxensis (strain HAW-EB4).